A 557-amino-acid polypeptide reads, in one-letter code: Dihydroxy-acid dehydratase (557 aa).

A Mg(2+)-binding site is contributed by Asp-78. Cys-119 is a [2Fe-2S] cluster binding site. Mg(2+)-binding residues include Asp-120 and Lys-121. Lys-121 bears the N6-carboxylysine mark. Cys-192 is a binding site for [2Fe-2S] cluster. Mg(2+) is bound at residue Glu-446. Catalysis depends on Ser-472, which acts as the Proton acceptor.

It belongs to the IlvD/Edd family. In terms of assembly, homodimer. It depends on [2Fe-2S] cluster as a cofactor. Mg(2+) is required as a cofactor.

It catalyses the reaction (2R)-2,3-dihydroxy-3-methylbutanoate = 3-methyl-2-oxobutanoate + H2O. It carries out the reaction (2R,3R)-2,3-dihydroxy-3-methylpentanoate = (S)-3-methyl-2-oxopentanoate + H2O. Its pathway is amino-acid biosynthesis; L-isoleucine biosynthesis; L-isoleucine from 2-oxobutanoate: step 3/4. It participates in amino-acid biosynthesis; L-valine biosynthesis; L-valine from pyruvate: step 3/4. Functions in the biosynthesis of branched-chain amino acids. Catalyzes the dehydration of (2R,3R)-2,3-dihydroxy-3-methylpentanoate (2,3-dihydroxy-3-methylvalerate) into 2-oxo-3-methylpentanoate (2-oxo-3-methylvalerate) and of (2R)-2,3-dihydroxy-3-methylbutanoate (2,3-dihydroxyisovalerate) into 2-oxo-3-methylbutanoate (2-oxoisovalerate), the penultimate precursor to L-isoleucine and L-valine, respectively. The chain is Dihydroxy-acid dehydratase from Campylobacter fetus subsp. fetus (strain 82-40).